A 1441-amino-acid polypeptide reads, in one-letter code: Envelopment polyprotein (1441 aa).

A signal peptide spans Met1–Ala13. The Lumenal portion of the chain corresponds to Ser14 to Asn200. Asn57 carries N-linked (GlcNAc...) asparagine; by host glycosylation. Over Ile201 to Ser221 the chain traverses the membrane. Residues Lys222–Lys305 lie on the Cytoplasmic side of the membrane. The segment at Gly306–Ile326 is a transmembrane helix. Topologically, residues Asn327–Cys361 are lumenal. The segment at Ile362–Phe382 is a transmembrane helix. Residues Lys383–Trp450 lie on the Cytoplasmic side of the membrane. Over Met451–Val471 the chain traverses the membrane. At Gln472–Tyr1395 the chain is on the lumenal side. A glycan (N-linked (GlcNAc...) asparagine; by host) is linked at Asn490. Positions Trp1066–Asp1087 are fusion peptide. The N-linked (GlcNAc...) asparagine; by host glycan is linked to Asn1177. The chain crosses the lipid bilayer at residues Ile1396–Leu1416. Residues Leu1417 to Ala1433 lie on the Cytoplasmic side of the membrane.

The protein belongs to the orthobunyaviruses M polyprotein family. As to quaternary structure, glycoprotein C and Glycoprotein N interact with each other.

It is found in the virion membrane. Its subcellular location is the host Golgi apparatus membrane. It localises to the host endoplasmic reticulum membrane. In terms of biological role, glycoprotein C and glycoprotein N interact with each other and are present at the surface of the virion. They are able to attach the virion to a cell receptor and to promote fusion of membranes after endocytosis of the virion. The polypeptide is Envelopment polyprotein (GP) (Bunyavirus La Crosse (isolate Human/United States/L78/1978)).